We begin with the raw amino-acid sequence, 483 residues long: Matrix metalloproteinase-20 (483 aa).

The N-terminal stretch at 1-22 (MKVLPASGLAVLLVTALKFSAA) is a signal peptide. A propeptide spans 23-107 (APSLFAATPR…PRCGVPDVAN (85 aa)) (activation peptide). The Cysteine switch motif lies at 98–105 (PRCGVPDV). Residue Cys100 coordinates Zn(2+). Ca(2+)-binding residues include Glu164, Ala165, and Asp166. Zn(2+) contacts are provided by His176 and Asp178. Ca(2+) contacts are provided by Asp183, Gly184, Arg186, and Thr188. His191 is a binding site for Zn(2+). Ca(2+) is bound by residues Glu197, Gly198, Gly200, and Asp202. His204 serves as a coordination point for Zn(2+). Ca(2+) is bound by residues Asp206 and Glu209. Zn(2+) is bound at residue His226. Glu227 is an active-site residue. Zn(2+) is bound by residues His230 and His236. Hemopexin repeat units follow at residues 293–343 (PDIC…FPQL), 344–389 (MSNV…GFPR), 391–439 (VQRI…FSGV), and 440–483 (NGQI…WIGC). Cysteines 296 and 483 form a disulfide.

This sequence belongs to the peptidase M10A family. Requires Zn(2+) as cofactor. It depends on Ca(2+) as a cofactor. Post-translationally, autoactivates at least at the 107-Asn-|-Tyr-108 site. As to expression, expressed specifically in the enamel organ.

It localises to the secreted. The protein resides in the extracellular space. The protein localises to the extracellular matrix. In terms of biological role, degrades amelogenin, the major protein component of the enamel matrix and two of the macromolecules characterizing the cartilage extracellular matrix: aggrecan and the cartilage oligomeric matrix protein (COMP). May play a central role in tooth enamel formation. The protein is Matrix metalloproteinase-20 (MMP20) of Sus scrofa (Pig).